The following is a 347-amino-acid chain: MRIEEDLKLGFKDVLIRPKRSTLKSRSDVELERQFTFKHSGQSWSGVPIIAANMDTVGTFSMASALASFDILTAVHKHYSVEEWQAFINNSSADVLKHVMVSTGTSDADFEKTKQILDLNPALNFVCIDVANGYSEHFVQFVAKAREAWPTKTICAGNVVTGEMCEELILSGADIVKVGIGPGSVCTTRVKTGVGYPQLSAVIECADAAHGLGGMIVSDGGCTTPGDVAKAFGGGADFVMLGGMLAGHEESGGRIVEENGEKFMLFYGMSSESAMKRHVGCVAEYRAAEGKTVKLPLRGPVENTARDILGGLRSACTYVGASRLKELTKRTTFIRVQEQENRIFNNL.

108–131 contributes to the NADP(+) binding site; sequence ADFEKTKQILDLNPALNFVCIDVA. K(+) is bound by residues Gly181 and Gly183. Catalysis depends on Cys186, which acts as the Thioimidate intermediate. 216–239 contacts NADP(+); the sequence is IVSDGGCTTPGDVAKAFGGGADFV.

The protein belongs to the IMPDH/GMPR family. GuaC type 1 subfamily. In terms of assembly, homotetramer.

It catalyses the reaction IMP + NH4(+) + NADP(+) = GMP + NADPH + 2 H(+). Its function is as follows. Catalyzes the irreversible NADPH-dependent deamination of GMP to IMP. It functions in the conversion of nucleobase, nucleoside and nucleotide derivatives of G to A nucleotides, and in maintaining the intracellular balance of A and G nucleotides. In Escherichia coli (strain SMS-3-5 / SECEC), this protein is GMP reductase.